We begin with the raw amino-acid sequence, 242 residues long: Acetoacetyl-CoA reductase (242 aa).

Residues 12–14 (RGI) and 82–86 (NAGIT) contribute to the NADP(+) site. Substrate-binding positions include D88 and 141 to 144 (QAGQ). Y147 functions as the Proton acceptor in the catalytic mechanism. 177–180 (PGYI) contacts NADP(+). 178–179 (GY) is a substrate binding site.

This sequence belongs to the short-chain dehydrogenases/reductases (SDR) family.

It is found in the cytoplasm. It catalyses the reaction a (3R)-3-hydroxyacyl-CoA + NADP(+) = a 3-oxoacyl-CoA + NADPH + H(+). It functions in the pathway biopolymer metabolism; poly-(R)-3-hydroxybutanoate biosynthesis. The chain is Acetoacetyl-CoA reductase (phaB) from Paracoccus denitrificans.